Reading from the N-terminus, the 636-residue chain is Methionine--tRNA ligase (636 aa).

The short motif at Y12–S22 is the 'HIGH' region element. 4 residues coordinate Zn(2+): C127, C130, C145, and C148. Positions K298–S302 match the 'KMSKS' region motif. K301 lines the ATP pocket. In terms of domain architecture, tRNA-binding spans E535 to S636.

The protein belongs to the class-I aminoacyl-tRNA synthetase family. MetG type 2A subfamily. As to quaternary structure, homodimer. Zn(2+) serves as cofactor.

It localises to the cytoplasm. It catalyses the reaction tRNA(Met) + L-methionine + ATP = L-methionyl-tRNA(Met) + AMP + diphosphate. Its function is as follows. Is required not only for elongation of protein synthesis but also for the initiation of all mRNA translation through initiator tRNA(fMet) aminoacylation. The sequence is that of Methionine--tRNA ligase (metG) from Fusobacterium nucleatum subsp. nucleatum (strain ATCC 25586 / DSM 15643 / BCRC 10681 / CIP 101130 / JCM 8532 / KCTC 2640 / LMG 13131 / VPI 4355).